We begin with the raw amino-acid sequence, 123 residues long: Large ribosomal subunit protein bL12 (123 aa).

Belongs to the bacterial ribosomal protein bL12 family. Homodimer. Part of the ribosomal stalk of the 50S ribosomal subunit. Forms a multimeric L10(L12)X complex, where L10 forms an elongated spine to which 2 to 4 L12 dimers bind in a sequential fashion. Binds GTP-bound translation factors.

Functionally, forms part of the ribosomal stalk which helps the ribosome interact with GTP-bound translation factors. Is thus essential for accurate translation. This is Large ribosomal subunit protein bL12 from Clostridium botulinum (strain ATCC 19397 / Type A).